The following is a 356-amino-acid chain: UDP-N-acetylglucosamine--N-acetylmuramyl-(pentapeptide) pyrophosphoryl-undecaprenol N-acetylglucosamine transferase (356 aa).

Residues 11-13 (TGG), Asn117, Arg160, Ser188, and Gln290 each bind UDP-N-acetyl-alpha-D-glucosamine.

This sequence belongs to the glycosyltransferase 28 family. MurG subfamily.

Its subcellular location is the cell inner membrane. It carries out the reaction di-trans,octa-cis-undecaprenyl diphospho-N-acetyl-alpha-D-muramoyl-L-alanyl-D-glutamyl-meso-2,6-diaminopimeloyl-D-alanyl-D-alanine + UDP-N-acetyl-alpha-D-glucosamine = di-trans,octa-cis-undecaprenyl diphospho-[N-acetyl-alpha-D-glucosaminyl-(1-&gt;4)]-N-acetyl-alpha-D-muramoyl-L-alanyl-D-glutamyl-meso-2,6-diaminopimeloyl-D-alanyl-D-alanine + UDP + H(+). Its pathway is cell wall biogenesis; peptidoglycan biosynthesis. Its function is as follows. Cell wall formation. Catalyzes the transfer of a GlcNAc subunit on undecaprenyl-pyrophosphoryl-MurNAc-pentapeptide (lipid intermediate I) to form undecaprenyl-pyrophosphoryl-MurNAc-(pentapeptide)GlcNAc (lipid intermediate II). In Rickettsia bellii (strain RML369-C), this protein is UDP-N-acetylglucosamine--N-acetylmuramyl-(pentapeptide) pyrophosphoryl-undecaprenol N-acetylglucosamine transferase.